The chain runs to 365 residues: Probable L-tyrosine/L-aspartate decarboxylase (365 aa).

Lys-225 bears the N6-(pyridoxal phosphate)lysine mark.

This sequence belongs to the group II decarboxylase family. MfnA subfamily. Pyridoxal 5'-phosphate is required as a cofactor.

It catalyses the reaction L-tyrosine + H(+) = tyramine + CO2. It carries out the reaction L-aspartate + H(+) = beta-alanine + CO2. The protein operates within cofactor biosynthesis; methanofuran biosynthesis. It functions in the pathway cofactor biosynthesis; coenzyme A biosynthesis. In terms of biological role, catalyzes the decarboxylation of L-tyrosine to produce tyramine for methanofuran biosynthesis. Can also catalyze the decarboxylation of L-aspartate to produce beta-alanine for coenzyme A (CoA) biosynthesis. The polypeptide is Probable L-tyrosine/L-aspartate decarboxylase (Methanocorpusculum labreanum (strain ATCC 43576 / DSM 4855 / Z)).